The following is a 76-amino-acid chain: RNA-binding protein KhpA (76 aa).

Residues 29 to 76 form the KH domain; the sequence is SLTYKLSVSKEDMGRVIGKQGRIAKAIRTLVYAVGSKNDKKIRLEIIE.

Belongs to the KhpA RNA-binding protein family. Forms a complex with KhpB.

It is found in the cytoplasm. Functionally, a probable RNA chaperone. Forms a complex with KhpB which binds to cellular RNA and controls its expression. Plays a role in peptidoglycan (PG) homeostasis and cell length regulation. The sequence is that of RNA-binding protein KhpA from Listeria innocua serovar 6a (strain ATCC BAA-680 / CLIP 11262).